We begin with the raw amino-acid sequence, 571 residues long: ATP-dependent RNA helicase RhlB (571 aa).

The Q motif signature appears at 9–37; it reads VTFSSFDLHPALIAGLESAGFTRCTPIQA. The 181-residue stretch at 40-220 folds into the Helicase ATP-binding domain; that stretch reads LPVALPGGDV…YEHMNEPEKL (181 aa). Residue 53 to 60 coordinates ATP; it reads AQTGTGKT. The short motif at 166–169 is the DEAD box element; sequence DEAD. One can recognise a Helicase C-terminal domain in the interval 231-393; it reads RVRQRIYFPS…PVTSELLTPL (163 aa). The segment at 391 to 558 is disordered; sequence TPLPRAPRVP…KPSGSPSLLS (168 aa). The segment covering 402-411 has biased composition (acidic residues); that stretch reads EGEEADDDAG. The span at 419–432 shows a compositional bias: basic and acidic residues; it reads REAREQRAAEEQRR. The span at 435–448 shows a compositional bias: gly residues; it reads GRGGPGGSRSGSGG. Residues 449–460 are compositionally biased toward basic and acidic residues; sequence GRRDGAGADGKP. Low complexity predominate over residues 483–497; it reads VVAAVAAQAPSAGVA. A compositionally biased stretch (basic residues) spans 503–512; it reads PRKRRRRRNG. The segment covering 539–558 has biased composition (low complexity); it reads VVAKPVRAAAKPSGSPSLLS.

The protein belongs to the DEAD box helicase family. RhlB subfamily. Component of the RNA degradosome, which is a multiprotein complex involved in RNA processing and mRNA degradation.

The protein resides in the cytoplasm. It catalyses the reaction ATP + H2O = ADP + phosphate + H(+). DEAD-box RNA helicase involved in RNA degradation. Has RNA-dependent ATPase activity and unwinds double-stranded RNA. This Xanthomonas axonopodis pv. citri (strain 306) protein is ATP-dependent RNA helicase RhlB.